Consider the following 209-residue polypeptide: 8-oxoguanine DNA glycosylase/AP lyase (209 aa).

Residues Lys132 and Asp150 contribute to the active site.

This sequence belongs to the type-2 OGG1 family.

The catalysed reaction is 2'-deoxyribonucleotide-(2'-deoxyribose 5'-phosphate)-2'-deoxyribonucleotide-DNA = a 3'-end 2'-deoxyribonucleotide-(2,3-dehydro-2,3-deoxyribose 5'-phosphate)-DNA + a 5'-end 5'-phospho-2'-deoxyribonucleoside-DNA + H(+). Functionally, catalyzes the excision of an oxidatively damaged form of guanine (7,8-dihydro-8-oxoguanine = 8-oxoG) from DNA. Also cleaves the DNA backbone at apurinic/apyrimidinic sites (AP sites). The sequence is that of 8-oxoguanine DNA glycosylase/AP lyase from Picrophilus torridus (strain ATCC 700027 / DSM 9790 / JCM 10055 / NBRC 100828 / KAW 2/3).